Reading from the N-terminus, the 587-residue chain is Probable terpene synthase 12 (587 aa).

Mg(2+) contacts are provided by D338, D342, and E489. Positions 338-342 (DDVYD) match the DDXXD motif motif.

Belongs to the terpene synthase family. It depends on Mg(2+) as a cofactor.

In terms of biological role, probable sesquiterpene synthase. The sequence is that of Probable terpene synthase 12 (TPS12) from Ricinus communis (Castor bean).